Reading from the N-terminus, the 213-residue chain is Endoplasmic reticulum vesicle protein 25 (213 aa).

Residues 1–20 form the signal peptide; the sequence is MILRIPSLLYLFTLLTAVYA. The Lumenal segment spans residues 21–181; it reads VKFDLTSDRN…TNESTNQRVK (161 aa). The region spanning 33 to 122 is the GOLD domain; it reads PKCIWNFASA…VRSVELDVDI (90 aa). A helical membrane pass occupies residues 182 to 202; sequence VFSVLIICCTIGLGVWQLLHL. Residues 203–213 lie on the Cytoplasmic side of the membrane; it reads RSFFKRKYLID.

Belongs to the EMP24/GP25L family.

The protein resides in the endoplasmic reticulum membrane. The protein localises to the golgi apparatus membrane. Constituent of COPII-coated endoplasmic reticulum-derived transport vesicles. Required for efficient transport of a subset of secretory proteins to the Golgi. Facilitates retrograde transport from the Golgi to the endoplasmic reticulum. The sequence is that of Endoplasmic reticulum vesicle protein 25 (ERV25) from Cryptococcus neoformans var. neoformans serotype D (strain JEC21 / ATCC MYA-565) (Filobasidiella neoformans).